The primary structure comprises 526 residues: Arp2/3 complex-activating protein rickA (526 aa).

Positions 305-356 (TTSSIAKPLENNVTPPPPLTKNNIPPPPPPPPLSKNNILPPPPPPMPTMAPA) are disordered. Residues 318-352 (TPPPPLTKNNIPPPPPPPPLSKNNILPPPPPPMPT) show a composition bias toward pro residues. WH2 domains follow at residues 383 to 400 (DTSD…LRKV) and 410 to 427 (SRDL…LRKV). Disordered stretches follow at residues 425–452 (RKVE…SKPN) and 464–526 (MEMS…FVRS). The interval 448-484 (VSKPNGVASILARRVAMEMSDSSSSSGSESDSGNWSD) is central and acidic domains. Positions 464–480 (MEMSDSSSSSGSESDSG) are enriched in low complexity. 2 stretches are compositionally biased toward polar residues: residues 481–491 (NWSDASVNSNK) and 506–526 (TTHA…FVRS).

In terms of assembly, homodimer.

The protein localises to the cell surface. Functionally, recruits and activates the Arp2/3 complex, which in turn leads to actin polymerization, promoting Rickettsia motility during infection. This chain is Arp2/3 complex-activating protein rickA (rickA), found in Rickettsia felis (strain ATCC VR-1525 / URRWXCal2) (Rickettsia azadi).